A 216-amino-acid polypeptide reads, in one-letter code: 3-keto-L-gulonate-6-phosphate decarboxylase UlaD (216 aa).

Position 11 (Asp-11) interacts with substrate. Residues Glu-33 and Asp-62 each coordinate Mg(2+). Residue Arg-192 coordinates substrate.

This sequence belongs to the HPS/KGPDC family. KGPDC subfamily. Homodimer. It depends on Mg(2+) as a cofactor.

It catalyses the reaction 3-dehydro-L-gulonate 6-phosphate + H(+) = L-xylulose 5-phosphate + CO2. The protein operates within cofactor degradation; L-ascorbate degradation; D-xylulose 5-phosphate from L-ascorbate: step 2/4. Its function is as follows. Catalyzes the decarboxylation of 3-keto-L-gulonate-6-P into L-xylulose-5-P. Is involved in the anaerobic L-ascorbate utilization. This chain is 3-keto-L-gulonate-6-phosphate decarboxylase UlaD, found in Salmonella choleraesuis (strain SC-B67).